We begin with the raw amino-acid sequence, 1393 residues long: MAGCHCPPAGDCPPVAPCTFSTPFNIGATLAPTGRLLSTIEMSSHRCMFDYFKQFSSDDNGRYAAQFDLLLGTYCNTLSLIRFLETGLSVACVCTRAPDLMYMREGTVQFEIQQPMIAREGPHPADQPIHTYMVKRLCRRSLSAAFVVAAEALALLSEVSLDGTAISTHLRMRAIQQLARNVRTILDSFERGTVDQMLRILLEKAPPAPLLIPLSRSQAEGRIAGQVMRANLVSELKRTVRTESFIMNKTNANRDTIISFLTKMVNCTHQTISMPRLTHSDSKGRLVDGVLVTTTMVRQKLLSGILDVVDTSARVPVTYGEMIISGTNLVTAVVMGKAVRNMDDIARYILNLKEDNIIDRTDEIVRGDDDRPQTAEISAELVTIGDKLIFLESMERRVYQATQVQYPLIGHVDLTFIMPLGIYQKRGDRYARHIGDYAPGPGCNVGDIRIFPPREIYFYNKDNQVISLSLSDAIGTLCHSSFLDVEATVGNLRNGKYTLSCVLGAYVTNPPALPLADASRQFFENIGEFLRDPPRWIDECHMTVEQFLSTGNPYLSMELHPAFDFFVVPGDVDLPGPHNVPQVMASISASLRVCNCNIPLPLCNSDFRDALGQELASTHHKMSDATINAVSATFSDISYPTAFYIIEAVIHGSERNFGLLMRLVIQCIRSYWDNCKRVAFVNNFHMVAFIDTYLCSGELPEECTNVYKDLMHHVRALRSIVRNYTVQTDPLYGQSHEELNHVLIDRTILPPLLWDCDPLIYQAEGMRDRDLYLNVGSENNYAVRPWLELQDADFQRTGNVLIHNRPIRDADRQTFVPHHAQEWTTLSKIYYYVMVPSFSRGQCCTMGIRFDNIYATSQSVIIPDLQPDEEPPLGPEDPRHPLNGRNLVPNTFNVMLHNARISVDADALLTLQETVNNMAERTTAILYGSTPDIGSSSSSTRHMRTFDGALHHGLLMMAYPCNDETVAAGTYFYPVPVNALFACHDHLAAVRDLPGNSRTLLYRAPPVPPFLGANYYSTFRQPVAQYVKESRCGPNEISYALMAGYFKLSPIGLYHQLRTGLHPGIAFTVIRQDRFLADMGLFAERASESYFLGQVSVTKRPHAGGVQFSLTQPRANVDLGVGYTATCTPLLLRNAITDMGNTVQSLHLTRGSPPLLHQEADEFLRKVTTRGQRAAPQRTVPFLGTLMPNLPSGLEHGQMSICEFIPTPVSADLEYFRTPCNPRGRAAGAIHSGEEASDIDDVMYDHQQGDPAYPFRATNNPWASQRLSYADKLYNGVYNLSGASPLFSPTYKFFTPAEVCCKTRCLDKLIGEAGSALASFASDGEVQFKRPIGSTELTEDPCSLFQEAYPILCATDKALLRAYSTGTTDNPETHLAQYLIRDASPIGGCLPIC.

Belongs to the herpesviridae major capsid protein family. In terms of assembly, homomultimer. Makes the hexons and eleven out of twelve pentons. Interacts with triplex proteins 1/TRX1 and 2/TRX2; adjacent capsomers are linked together in groups of three by triplexes, heterotrimeric complexes composed of one molecule of TRX1 and two molecules of TRX2. Interacts with scaffold protein; this interaction allows efficient MCP transport to the host nucleus. Interacts with capsid vertex component 2/CVC2. Interacts with the small capsomere-interacting protein/SCP.

Its subcellular location is the virion. The protein localises to the host nucleus. In terms of biological role, self-assembles to form an icosahedral capsid with a T=16 symmetry, about 200 nm in diameter, and consisting of 150 hexons and 12 pentons (total of 162 capsomers). Hexons form the edges and faces of the capsid and are each composed of six MCP molecules. In contrast, one penton is found at each of the 12 vertices. Eleven of the pentons are MCP pentamers, while the last vertex is occupied by the portal complex. The capsid is surrounded by a layer of proteinaceous material designated the tegument which, in turn, is enclosed in an envelope of host cell-derived lipids containing virus-encoded glycoproteins. The protein is Major capsid protein of Gallus gallus (Chicken).